A 438-amino-acid chain; its full sequence is Neutral metalloprotease ShpI (438 aa).

A signal peptide spans 1 to 26; sequence MINKKKLVTSLVTSSLLATFTLGSFA. The propeptide occupies 27–101; sequence DAHTYIINNE…KSENALSNSK (75 aa). His-242 serves as a coordination point for Zn(2+). Residue Glu-243 is part of the active site. Positions 246 and 269 each coordinate Zn(2+).

This sequence belongs to the peptidase M30 family. Requires Zn(2+) as cofactor. Several different N-terminal ends may be produced, the favored N-terminus is position 102.

Its subcellular location is the secreted. With respect to regulation, inhibited by metal- and zinc-specific inhibitors, such as EDTA and 1,10-phenanthroline in vitro. Is resistant to all inhibitors of serine, cysteine and aspartic proteases. Functionally, protease that has a low substrate specificity. Catalyzes the hydrolysis of glucagon, melittin and oxidized beta-insulin at various positions in vitro. Is not able to cleave elastin or the synthetic substrates FAGLA (a substrate for neutral proteinases) and FALGPA (a substrate for collagenase). This Staphylococcus hyicus protein is Neutral metalloprotease ShpI.